The primary structure comprises 373 residues: Muscleblind-like protein 2 (373 aa).

4 C3H1-type zinc fingers span residues 13–41 (WLTLEVCRQFQRGTCSRSDEECKFAHPPK), 47–73 (NGRVIACFDSLKGRCSRENCKYLHPPT), 176–204 (TDKLEVCREFQRGNCARGETDCRFAHPAD), and 212–238 (DNTVTVCMDYIKGRCMREKCKYFHPPA).

It belongs to the muscleblind family. As to quaternary structure, interacts with ITGA3. Expressed in heart, brain, placenta, lung, liver, skeletal muscle, kidney and pancreas.

It is found in the nucleus. The protein resides in the cytoplasm. Its function is as follows. Mediates pre-mRNA alternative splicing regulation. Acts either as activator or repressor of splicing on specific pre-mRNA targets. Inhibits cardiac troponin-T (TNNT2) pre-mRNA exon inclusion but induces insulin receptor (IR) pre-mRNA exon inclusion in muscle. Antagonizes the alternative splicing activity pattern of CELF proteins. RNA-binding protein that binds to 5'ACACCC-3' core sequence, termed zipcode, within the 3'UTR of ITGA3. Binds to CUG triplet repeat expansion in myotonic dystrophy muscle cells by sequestering the target RNAs. Together with RNA binding proteins RBPMS and RBFOX2, activates vascular smooth muscle cells alternative splicing events. Regulates NCOR2 alternative splicing. Seems to regulate expression and localization of ITGA3 by transporting it from the nucleus to cytoplasm at adhesion plaques. May play a role in myotonic dystrophy pathophysiology (DM). This Homo sapiens (Human) protein is Muscleblind-like protein 2 (MBNL2).